The sequence spans 520 residues: Protein nucleotidyltransferase YdiU (520 aa).

ATP contacts are provided by Gly108, Gly110, Arg111, Lys130, Asp142, Gly143, Arg193, and Arg200. Asp269 acts as the Proton acceptor in catalysis. Positions 270 and 279 each coordinate Mg(2+). Residue Asp279 participates in ATP binding.

This sequence belongs to the SELO family. Requires Mg(2+) as cofactor. Mn(2+) serves as cofactor.

It catalyses the reaction L-seryl-[protein] + ATP = 3-O-(5'-adenylyl)-L-seryl-[protein] + diphosphate. It carries out the reaction L-threonyl-[protein] + ATP = 3-O-(5'-adenylyl)-L-threonyl-[protein] + diphosphate. The enzyme catalyses L-tyrosyl-[protein] + ATP = O-(5'-adenylyl)-L-tyrosyl-[protein] + diphosphate. The catalysed reaction is L-histidyl-[protein] + UTP = N(tele)-(5'-uridylyl)-L-histidyl-[protein] + diphosphate. It catalyses the reaction L-seryl-[protein] + UTP = O-(5'-uridylyl)-L-seryl-[protein] + diphosphate. It carries out the reaction L-tyrosyl-[protein] + UTP = O-(5'-uridylyl)-L-tyrosyl-[protein] + diphosphate. Nucleotidyltransferase involved in the post-translational modification of proteins. It can catalyze the addition of adenosine monophosphate (AMP) or uridine monophosphate (UMP) to a protein, resulting in modifications known as AMPylation and UMPylation. The protein is Protein nucleotidyltransferase YdiU of Cupriavidus pinatubonensis (strain JMP 134 / LMG 1197) (Cupriavidus necator (strain JMP 134)).